A 975-amino-acid chain; its full sequence is C-1-tetrahydrofolate synthase, mitochondrial (975 aa).

Residues 1 to 34 (MLSRLSLLSNSRAFQQARWRIYRLKVSPTVHASQ) constitute a mitochondrion transit peptide. Positions 35-343 (YHILSGRKLA…KPLPLHLESP (309 aa)) are methylenetetrahydrofolate dehydrogenase and cyclohydrolase. Substrate-binding positions include 83-87 (YVRMK) and 130-132 (IQL). NADP(+) contacts are provided by residues 201–203 (GRS) and Ser-226. Position 301-305 (301-305 (PGGVG)) interacts with substrate. The formyltetrahydrofolate synthetase stretch occupies residues 344–975 (VPSDIDISRA…DDDGEIEGLF (632 aa)). Residue 408-415 (TPLGEGKS) participates in ATP binding.

In the N-terminal section; belongs to the tetrahydrofolate dehydrogenase/cyclohydrolase family. It in the C-terminal section; belongs to the formate--tetrahydrofolate ligase family. In terms of assembly, homodimer.

The protein resides in the mitochondrion. The catalysed reaction is (6R)-5,10-methylene-5,6,7,8-tetrahydrofolate + NADP(+) = (6R)-5,10-methenyltetrahydrofolate + NADPH. The enzyme catalyses (6R)-5,10-methenyltetrahydrofolate + H2O = (6R)-10-formyltetrahydrofolate + H(+). It carries out the reaction (6S)-5,6,7,8-tetrahydrofolate + formate + ATP = (6R)-10-formyltetrahydrofolate + ADP + phosphate. Its pathway is one-carbon metabolism; tetrahydrofolate interconversion. Mitochondrial isozyme of C-1-tetrahydrofolate synthase. The trifunctional enzyme catalyzes the interconversion of the one-carbon derivatives of tetrahydrofolate (THF) between different oxidation states by the enzymatic activities 10-formyltetrahydrofolate synthetase, 5,lO-methenyltetrahydrofolate cyclohydrolase, and 5,lO-methylenetetrahydrofolate dehydrogenase. The chain is C-1-tetrahydrofolate synthase, mitochondrial from Saccharomyces cerevisiae (strain ATCC 204508 / S288c) (Baker's yeast).